The primary structure comprises 135 residues: Large ribosomal subunit protein uL16c (135 aa).

The protein belongs to the universal ribosomal protein uL16 family. In terms of assembly, part of the 50S ribosomal subunit.

The protein resides in the plastid. Its subcellular location is the chloroplast. The chain is Large ribosomal subunit protein uL16c from Lotus japonicus (Lotus corniculatus var. japonicus).